Reading from the N-terminus, the 387-residue chain is O-phospho-L-seryl-tRNA:Cys-tRNA synthase 2 (387 aa).

Pyridoxal 5'-phosphate contacts are provided by residues 89–90, Asn196, and 219–221; these read AR and SGH. An N6-(pyridoxal phosphate)lysine modification is found at Lys222.

It belongs to the SepCysS family. In terms of assembly, homodimer. Interacts with SepRS. The cofactor is pyridoxal 5'-phosphate.

The enzyme catalyses O-phospho-L-seryl-tRNA(Cys) + hydrogen sulfide + H(+) = L-cysteinyl-tRNA(Cys) + phosphate. In terms of biological role, converts O-phospho-L-seryl-tRNA(Cys) (Sep-tRNA(Cys)) to L-cysteinyl-tRNA(Cys) (Cys-tRNA(Cys)). The sequence is that of O-phospho-L-seryl-tRNA:Cys-tRNA synthase 2 from Methanococcoides burtonii (strain DSM 6242 / NBRC 107633 / OCM 468 / ACE-M).